A 479-amino-acid polypeptide reads, in one-letter code: Serralysin C (479 aa).

The propeptide occupies 1–17 (MGKNLSLRQDDAQHALS). H188 lines the Zn(2+) pocket. E189 is a catalytic residue. Residues H192 and Y228 each contribute to the Zn(2+) site. Residues R265, G267, D297, G299, G300, D302, T339, E341, G346, G348, D350, N355, A357, N359, G363, G364, A365, G366, D368, G372, G373, G375, D377, G381, G382, A383, G384, D386, D395, D402, and D412 each coordinate Ca(2+). Hemolysin-type calcium-binding repeat units follow at residues 344-361 (IGGS…DNIL), 362-379 (QGGA…ADTL), and 380-397 (YGGA…QDST).

This sequence belongs to the peptidase M10B family. Ca(2+) is required as a cofactor. Requires Zn(2+) as cofactor.

It is found in the secreted. It carries out the reaction Preferential cleavage of bonds with hydrophobic residues in P1'.. This chain is Serralysin C (prtC), found in Dickeya chrysanthemi (Pectobacterium chrysanthemi).